The following is a 525-amino-acid chain: Peptide chain release factor 3 (525 aa).

One can recognise a tr-type G domain in the interval 9-276 (AKRRTFAIIS…GFTRYAPAPQ (268 aa)). GTP contacts are provided by residues 18–25 (SHPDAGKT), 86–90 (DTPGH), and 140–143 (NKFD).

This sequence belongs to the TRAFAC class translation factor GTPase superfamily. Classic translation factor GTPase family. PrfC subfamily.

The protein resides in the cytoplasm. Increases the formation of ribosomal termination complexes and stimulates activities of RF-1 and RF-2. It binds guanine nucleotides and has strong preference for UGA stop codons. It may interact directly with the ribosome. The stimulation of RF-1 and RF-2 is significantly reduced by GTP and GDP, but not by GMP. The polypeptide is Peptide chain release factor 3 (Francisella tularensis subsp. holarctica (strain FTNF002-00 / FTA)).